The following is a 2152-amino-acid chain: Oxygen-regulated protein 1 (2152 aa).

The span at 1-19 (MSDTPSTGFSIIHPTSSED) shows a compositional bias: polar residues. The segment at 1–25 (MSDTPSTGFSIIHPTSSEDQVPPPR) is disordered. Doublecortin domains lie at 36–118 (KRIS…VDLD) and 154–233 (RSLV…GNYD). Disordered regions lie at residues 353–375 (VSKT…RTES), 1435–1455 (DMEE…MTSS), and 1587–1616 (DWSD…ELAQ).

In terms of assembly, interacts (via the doublecortin domains) with microtubules. Interacts with RP1L1. Interacts with MAK.

The protein resides in the cytoplasm. It is found in the cytoskeleton. The protein localises to the cilium axoneme. It localises to the cell projection. Its subcellular location is the cilium. The protein resides in the photoreceptor outer segment. Microtubule-associated protein regulating the stability and length of the microtubule-based axoneme of photoreceptors. Required for the differentiation of photoreceptor cells, it plays a role in the organization of the outer segment of rod and cone photoreceptors ensuring the correct orientation and higher-order stacking of outer segment disks along the photoreceptor axoneme. This is Oxygen-regulated protein 1 (RP1) from Papio hamadryas (Hamadryas baboon).